A 123-amino-acid polypeptide reads, in one-letter code: Small ribosomal subunit protein uS12 (123 aa).

A disordered region spans residues 9 to 28 (RNGRKRATKKTTTPALKGAP). Low complexity predominate over residues 18–27 (KTTTPALKGA). Asp-89 carries the 3-methylthioaspartic acid modification.

It belongs to the universal ribosomal protein uS12 family. In terms of assembly, part of the 30S ribosomal subunit. Contacts proteins S8 and S17. May interact with IF1 in the 30S initiation complex.

Its function is as follows. With S4 and S5 plays an important role in translational accuracy. In terms of biological role, interacts with and stabilizes bases of the 16S rRNA that are involved in tRNA selection in the A site and with the mRNA backbone. Located at the interface of the 30S and 50S subunits, it traverses the body of the 30S subunit contacting proteins on the other side and probably holding the rRNA structure together. The combined cluster of proteins S8, S12 and S17 appears to hold together the shoulder and platform of the 30S subunit. The chain is Small ribosomal subunit protein uS12 from Desulfosudis oleivorans (strain DSM 6200 / JCM 39069 / Hxd3) (Desulfococcus oleovorans).